The chain runs to 1342 residues: DNA-directed RNA polymerase subunit beta (1342 aa).

It belongs to the RNA polymerase beta chain family. As to quaternary structure, the RNAP catalytic core consists of 2 alpha, 1 beta, 1 beta' and 1 omega subunit. When a sigma factor is associated with the core the holoenzyme is formed, which can initiate transcription.

It catalyses the reaction RNA(n) + a ribonucleoside 5'-triphosphate = RNA(n+1) + diphosphate. In terms of biological role, DNA-dependent RNA polymerase catalyzes the transcription of DNA into RNA using the four ribonucleoside triphosphates as substrates. This Histophilus somni (strain 2336) (Haemophilus somnus) protein is DNA-directed RNA polymerase subunit beta.